Consider the following 2357-residue polypeptide: Protein transport protein Sec16A (2357 aa).

Disordered stretches follow at residues 1–25 and 57–303; these read MQPP…RSVF and FSRQ…STFR. Composition is skewed to low complexity over residues 64-76 and 210-227; these read STPL…SSPP and QMPG…PSGQ. The segment covering 285-303 has biased composition (polar residues); that stretch reads HLQSGSHLANNSDPESTFR. Phosphoserine is present on residues Ser-296, Ser-314, and Ser-331. Disordered stretches follow at residues 335-359, 508-540, 553-603, 758-828, 924-987, 1006-1038, and 1059-1151; these read NPLA…GSGC, APDA…ARPQ, KPED…TGIF, VQPP…NPPV, LLVQ…SSHQ, VNVY…PNLD, and QELV…APGP. Positions 520–536 are enriched in low complexity; that stretch reads SVSSSYSSRSHGRLSGS. Phosphoserine occurs at positions 559, 569, 587, 589, and 592. Thr-593 is modified (phosphothreonine). A Phosphoserine modification is found at Ser-595. Composition is skewed to polar residues over residues 766–778 and 803–825; these read SGQQ…SAAP and LQSQ…SLQN. Residues 1006-1028 are compositionally biased toward polar residues; sequence VNVYNPSHSDSLASQQSVASHPR. Residues 1019–1890 form a required for localization to endoplasmic reticulum exit sites region; it reads SQQSVASHPR…QQVERQIKEG (872 aa). Ser-1069 is modified (phosphoserine). Residues 1080 to 1101 are compositionally biased toward polar residues; it reads ELSNPESLPAQGQAQNSAQSPA. Residues 1101 to 1400 form an interaction with MIA3 region; that stretch reads ASLVLVDAGQ…EAPLPPGSFH (300 aa). A required for endoplasmic reticulum localization region spans residues 1102-1405; it reads SLVLVDAGQQ…PGSFHGDFAY (304 aa). The span at 1118–1131 shows a compositional bias: low complexity; that stretch reads QSSSVSLVSSGSGQ. A compositionally biased stretch (pro residues) spans 1138–1151; the sequence is QPWPQPVPALAPGP. 3 positions are modified to phosphoserine: Ser-1207, Ser-1229, and Ser-1305. A disordered region spans residues 1215 to 1248; it reads YPEPERPSSRASHSSERPPPRQGYPEGYYSSKSG. The segment covering 1216-1233 has biased composition (basic and acidic residues); sequence PEPERPSSRASHSSERPP. The segment covering 1307 to 1322 has biased composition (basic and acidic residues); that stretch reads FGDRPEKRDNNWRYDP. The interval 1307–1378 is disordered; that stretch reads FGDRPEKRDN…SLSSHSHQSQ (72 aa). The residue at position 1325 (Thr-1325) is a Phosphothreonine. Phosphoserine occurs at positions 1327, 1347, 1350, 1356, 1359, 1362, 1369, 1573, and 1601. Residues 1333–1354 show a composition bias toward basic and acidic residues; that stretch reads DPHRDPYGEEVDRRSVHSEHSA. The segment covering 1356–1375 has biased composition (low complexity); it reads SLHSAHSLASRRSSLSSHSH. The interval 1434–1890 is central conserved domain (CCD); mediates interaction with RNF183, LRRK2 and SEC13; the sequence is QVSSRPTSPE…QQVERQIKEG (457 aa). At Thr-1907 the chain carries Phosphothreonine. Phosphoserine is present on residues Ser-1939, Ser-1964, Ser-2022, and Ser-2042. Disordered stretches follow at residues 2049 to 2110, 2141 to 2181, and 2226 to 2328; these read KFAN…SWFF, VNLN…PVNM, and NLFV…MPFY. The residue at position 2054 (Thr-2054) is a Phosphothreonine. Residues Ser-2056, Ser-2073, and Ser-2083 each carry the phosphoserine modification. The span at 2087–2106 shows a compositional bias: basic and acidic residues; it reads ETKRPGQAAKKETKEPKKGE. The segment at 2106-2357 is required for interaction with SEC23A; the sequence is ESWFFRWLPG…IGQRKHLVLN (252 aa). 2 positions are modified to phosphoserine: Ser-2271 and Ser-2291. Composition is skewed to low complexity over residues 2289-2302 and 2310-2324; these read ELSR…LSRE and APGD…PSGA.

This sequence belongs to the SEC16 family. SEC16A and SEC16B are each present in multiple copies in a heteromeric complex. Interacts with SEC23A. Interacts with RNF183 and RNF152. Interacts with LRRK2 (via ROC domain). Interacts with SEC13. Interacts with RAB10. Interacts with MIA3. Interacts with GORASP2 in response to ER stress. As to expression, ubiquitous. Expressed at higher levels in the pancreas.

The protein resides in the endoplasmic reticulum membrane. It is found in the golgi apparatus membrane. It localises to the cytoplasm. The protein localises to the perinuclear region. Its subcellular location is the cytosol. The protein resides in the microsome membrane. In terms of biological role, acts as a molecular scaffold that plays a key role in the organization of the endoplasmic reticulum exit sites (ERES), also known as transitional endoplasmic reticulum (tER). SAR1A-GTP-dependent assembly of SEC16A on the ER membrane forms an organized scaffold defining an ERES. Required for secretory cargo traffic from the endoplasmic reticulum to the Golgi apparatus. Mediates the recruitment of MIA3/TANGO to ERES. Regulates both conventional (ER/Golgi-dependent) and GORASP2-mediated unconventional (ER/Golgi-independent) trafficking of CFTR to cell membrane. Positively regulates the protein stability of E3 ubiquitin-protein ligases RNF152 and RNF183 and the ER localization of RNF183. Acts as a RAB10 effector in the regulation of insulin-induced SLC2A4/GLUT4 glucose transporter-enriched vesicles delivery to the cell membrane in adipocytes. The protein is Protein transport protein Sec16A (SEC16A) of Homo sapiens (Human).